A 204-amino-acid chain; its full sequence is Urease accessory protein UreG (204 aa).

12–19 (GPVGSGKT) provides a ligand contact to GTP.

This sequence belongs to the SIMIBI class G3E GTPase family. UreG subfamily. As to quaternary structure, homodimer. UreD, UreF and UreG form a complex that acts as a GTP-hydrolysis-dependent molecular chaperone, activating the urease apoprotein by helping to assemble the nickel containing metallocenter of UreC. The UreE protein probably delivers the nickel.

The protein resides in the cytoplasm. Functionally, facilitates the functional incorporation of the urease nickel metallocenter. This process requires GTP hydrolysis, probably effectuated by UreG. The chain is Urease accessory protein UreG from Pseudomonas paraeruginosa (strain DSM 24068 / PA7) (Pseudomonas aeruginosa (strain PA7)).